A 336-amino-acid polypeptide reads, in one-letter code: MTFIIAVVGATGNQGGSVARSLVQNPSFSVRAITRSPDSQASRSLLSAGAEVVKADGFNGEEMLAAFQGAWGAFVNLNSDDPIWRQPGGPTEFDLGKTIVDAAAGAGVKHLVFSSGPPCVEMTGGKVNMKAMEMKYKIEQYARKLGSFETLTPINPAWYLENFLAEEVAPIFGGFPYFPDEEGYLTFRVPHWAGPGGDNRVPFLGIRDDFGDIIHGIFLNPERYNGRVIHGVSQLRGFDELVADFEQVTGKKCRYEPVLPSWEAFDIHGIPELEDVKLMFAFTQTTGGRYFAPEPSEADTAAELKRTTAVALGKPEPEQHTLRTKDFFRKHFATEK.

Position 135 (Lys135) interacts with NADP(+).

Belongs to the NmrA-type oxidoreductase family.

The catalysed reaction is 4-{[(2S,5S)-5-[(4-hydroxyphenyl)methyl]-2,5-dihydropyrazin-2-yl]methyl}phenol + 2 NADPH + 2 H(+) = (S,S)-2,5-di-(p-hydroxybenzyl)piperazine + 2 NADP(+). The protein operates within secondary metabolite biosynthesis. Functionally, nmrA-like family domain-containing oxidoreductase; part of the gene cluster that mediates the biosynthesis of the alkaloid (-)-FR901483, a potent immunosuppressant that shows efficacy in animal models and a probable inhibitor of purine nucleotide biosynthesis by targeting phosphoribosylpyrophosphate amidotransferase (PPAT). Within the pathway, FrzB catalyzes the reduction of 4-{[(2S,5S)-5-[(4-hydroxyphenyl)methyl]-2,5-dihydropyrazin-2-yl]methyl}phenol to produce the (S,S)-dityrosyl-piperazine intermediate. The biosynthesis of (-)-FR901483 starts with the condensation of two L-tyrosines to yield (S,S)-dityrosyl-piperazine. This process occurs in 3 steps with the non-canonical nonribosomal peptide synthetase FrzA catalyzing the reduction of L-tyrosine into L-tyrosinal, the spontaneous condensation of 2 L-tyrosinal units, and the subsequent reduction by the NmrA-like family domain-containing oxidoreductase FrzB. The cytochrome P450 monooxygenase FrzC then performs coupling between N10 and C1' to morph the piperazine into a 1,4-diazabicyclo[3.2.1]octane spiro-fused to a 2,5-cyclohexadienone. The dienone portion is further reduced to cyclohexanone by the flavin-dependent reductase FrzD. The methyltranserases (MTs) FrzE and FrzF are then involved in the methylation at the C10' amine and the C4 phenolic oxygen, respectively. The order of the two MTs appear to be interchangeable. Cleavage of the C9-N10' bond by the dioxygenase FrzG then leads to formation of a conjugated iminium. In addition to the oxidation of C9, an additional dehydrogenation between C7 and C8 can occur to give a likely shunt product. The next biosynthetic step is the intramolecular aldol condensation catalyzed by the newly identified aldolase FrzH to yield an aza-tricyclic product with the formation of a C9-C3' bond. The short-chain dehydrogenase/reductase FrzI then produces dephospho-(-)-FR901483 that is phosphorylated at C4'-OH into (-)-FR901483 by the phosphotransferase FrzJ. The protein is NmrA-like family domain-containing oxidoreductase FrzB of Cladobotryum sp.